Reading from the N-terminus, the 147-residue chain is Large ribosomal subunit protein uL15 (147 aa).

Positions 1–28 (MIRRRKKVRKLRGSHTHGWGCKKKHRGG) are enriched in basic residues. Residues 1-43 (MIRRRKKVRKLRGSHTHGWGCKKKHRGGGSKGGRGMAGTGKRN) are disordered. The segment covering 29-38 (GSKGGRGMAG) has biased composition (gly residues).

This sequence belongs to the universal ribosomal protein uL15 family. Part of the 50S ribosomal subunit.

In terms of biological role, binds to the 23S rRNA. The protein is Large ribosomal subunit protein uL15 of Pyrococcus furiosus (strain ATCC 43587 / DSM 3638 / JCM 8422 / Vc1).